A 496-amino-acid polypeptide reads, in one-letter code: KYHNPHFIGNRSVITHLMEWKYDDIGDECERFLGPYGYGGVQVSPVNEHAILDRRPWYERYQPVSYDIRTRSGDEQQFRRMVKRCNKAGVRIYVDIVLNHMTGAQSGKGTNGHHYDGNTLQYPGVPFGPNDFHGHESCPTQDLEIHDYTNPKEARNCRLSGLRDLKQQSEYVRQKQVDFLNHLIDIGVAGFRSDASTHQWPDDLRSIYSRLHNLNKEFFPENSQPFIYHETIYYGGNGINSNEYTSLGRIIEFRFYKEITNVFRGNNPLHWLKNFGTEWGLVPSGDALVMIDSHDLRVGHTGKLGFNINCFEGRLLKAATAFMLAWNYGVPRVMSSYFWNQIIKDGKDVNDWVGPPSDKNGNILSVHPNPDMTCNHEWICEHRWREIYNMVKFRMIAGQEPVHNWWDNGDYQIAFSRGNRAFIAINLQKNQQNLQQKLHTGLPAGTYCDIISGNLIDNKCTGKSIHVDKNGQADVYVGHDEFDAFVAYHIGARIVS.

C29 and C85 are oxidised to a cystine. 3 residues coordinate Ca(2+): N99, R155, and D164. Residue R192 coordinates chloride. The active-site Nucleophile is the D194. H198 lines the Ca(2+) pocket. The active-site Proton donor is the E230. R332 lines the chloride pocket. 2 cysteine pairs are disulfide-bonded: C374-C380 and C448-C460.

The protein belongs to the glycosyl hydrolase 13 family. In terms of assembly, monomer. It depends on Ca(2+) as a cofactor. Requires chloride as cofactor. In terms of processing, disulfide bonds are present.

It localises to the secreted. It catalyses the reaction Endohydrolysis of (1-&gt;4)-alpha-D-glucosidic linkages in polysaccharides containing three or more (1-&gt;4)-alpha-linked D-glucose units.. With respect to regulation, inhibited by alpha-amylase inhibitors from wheat and rye. The most effective inhibitors are the wheat tetrameric alpha-amylase inhibitor (WTAI) and the rye dimeric alpha-amylase inhibitor (RDAI-1). Not inhibited by alpha-amylase inhibitor from barley. Its function is as follows. Aids in the digestion of starch and glycogen derived from food, such as skin scales, fungi and bacteria. The sequence is that of Alpha-amylase from Dermatophagoides pteronyssinus (European house dust mite).